The chain runs to 239 residues: Thymidylate kinase (239 aa).

An ATP-binding site is contributed by 10 to 17; that stretch reads GVNRVGKS.

Belongs to the thymidylate kinase family.

It carries out the reaction dTMP + ATP = dTDP + ADP. It participates in pyrimidine metabolism; dTTP biosynthesis. Catalyzes the conversion of dTMP to dTDP. This chain is Thymidylate kinase (TMK), found in African swine fever virus (isolate Tick/South Africa/Pretoriuskop Pr4/1996) (ASFV).